Reading from the N-terminus, the 199-residue chain is MELWIATGNKGKLAEYKQLLRELPDLKVFSQGDIASFTPRPEDGKTFEDNARIKAKTLRAVKNNVWVLGEDAGLVVEGLNGLPGIHSARYAGPKASDSENVSKLLKMITLRPMPNKNAKFVCTTVVYTPTGEEWVFNGEMKGTIASKPAGLHGFGYDPVFIPEGQTQTLAELGTGYKSLLSHRAMALKAFLEKLQTVNP.

7-12 (TGNKGK) serves as a coordination point for substrate. D71 acts as the Proton acceptor in catalysis. D71 contacts Mg(2+). Residues A72, 154-157 (FGYD), K177, and 182-183 (HR) each bind substrate.

Belongs to the HAM1 NTPase family. As to quaternary structure, homodimer. The cofactor is Mg(2+).

The enzyme catalyses XTP + H2O = XMP + diphosphate + H(+). It catalyses the reaction dITP + H2O = dIMP + diphosphate + H(+). It carries out the reaction ITP + H2O = IMP + diphosphate + H(+). Its function is as follows. Pyrophosphatase that catalyzes the hydrolysis of nucleoside triphosphates to their monophosphate derivatives, with a high preference for the non-canonical purine nucleotides XTP (xanthosine triphosphate), dITP (deoxyinosine triphosphate) and ITP. Seems to function as a house-cleaning enzyme that removes non-canonical purine nucleotides from the nucleotide pool, thus preventing their incorporation into DNA/RNA and avoiding chromosomal lesions. In Bdellovibrio bacteriovorus (strain ATCC 15356 / DSM 50701 / NCIMB 9529 / HD100), this protein is dITP/XTP pyrophosphatase.